The sequence spans 100 residues: Apolipoprotein C-II (100 aa).

Positions 1–22 (MGSRFLLALFLVLLVLGCEVQA) are cleaved as a signal peptide. Residues 66–74 (SVDEKLRDM) form a lipid binding region. The interval 78–100 (SSAAMTTYASIFTDQILTLLKGE) is lipoprotein lipase cofactor.

This sequence belongs to the apolipoprotein C2 family. Post-translationally, proapolipoprotein C-II is synthesized as a sialic acid containing glycoprotein which is subsequently desialylated prior to its proteolytic processing. In terms of processing, proapolipoprotein C-II, the major form found in plasma undergoes proteolytic cleavage of its N-terminal hexapeptide to generate the mature form apolipoprotein C-II, which occurs as the minor form in plasma.

The protein localises to the secreted. Component of chylomicrons, very low-density lipoproteins (VLDL), low-density lipoproteins (LDL), and high-density lipoproteins (HDL) in plasma. Plays an important role in lipoprotein metabolism as an activator of lipoprotein lipase. The chain is Apolipoprotein C-II (APOC2) from Ellobius talpinus (Northern mole vole).